A 31-amino-acid polypeptide reads, in one-letter code: Photosystem II reaction center protein T (31 aa).

Residues 3 to 23 (ALVYTFLLVGTLGIIFFSIFF) traverse the membrane as a helical segment.

It belongs to the PsbT family. In terms of assembly, PSII is composed of 1 copy each of membrane proteins PsbA, PsbB, PsbC, PsbD, PsbE, PsbF, PsbH, PsbI, PsbJ, PsbK, PsbL, PsbM, PsbT, PsbY, PsbZ, Psb30/Ycf12, at least 3 peripheral proteins of the oxygen-evolving complex and a large number of cofactors. It forms dimeric complexes.

It is found in the plastid. It localises to the chloroplast thylakoid membrane. Functionally, found at the monomer-monomer interface of the photosystem II (PS II) dimer, plays a role in assembly and dimerization of PSII. PSII is a light-driven water plastoquinone oxidoreductase, using light energy to abstract electrons from H(2)O, generating a proton gradient subsequently used for ATP formation. In Bigelowiella natans (Pedinomonas minutissima), this protein is Photosystem II reaction center protein T.